A 370-amino-acid polypeptide reads, in one-letter code: Vasopressin V2 receptor (370 aa).

The segment covering 1–21 (MFMASTTSAVPWHLSQPTPAG) has biased composition (polar residues). A disordered region spans residues 1 to 26 (MFMASTTSAVPWHLSQPTPAGNGSEG). The Extracellular portion of the chain corresponds to 1 to 38 (MFMASTTSAVPWHLSQPTPAGNGSEGELLTARDPLLAQ). Asparagine 22 carries an N-linked (GlcNAc...) asparagine glycan. Residues 39-63 (AELALLSTVFVAVALSNGLVLGALV) traverse the membrane as a helical segment. The Cytoplasmic segment spans residues 64-77 (RRGRRGRWAPMHVF). The chain crosses the membrane as a helical span at residues 78 to 98 (IGHLCLADLAVALFQVLPQLA). Over 99–113 (WDATDRFRGPDALCR) the chain is Extracellular. A helical membrane pass occupies residues 114-135 (AVKYLQMVGMYASSYMILAMTL). At 136–159 (DRHRAICRPMLAHRHGGGTHWNRP) the chain is on the cytoplasmic side. Residues 160–180 (VLLAWAFSLLFSLPQLFIFAQ) traverse the membrane as a helical segment. At 181-199 (RDVDGSGVLDCWARFAEPW) the chain is on the extracellular side. Residues 200 to 219 (GLRAYVTWIALMVFVAPALG) traverse the membrane as a helical segment. Topologically, residues 220–270 (IAACQVLIFREIHASLGPGPVPRAGGPRRGCRPGSPAEGARVSAAVAKTVK) are cytoplasmic. Residues 271 to 292 (MTLVIVIVYVLCWAPFFLVQLW) traverse the membrane as a helical segment. Topologically, residues 293–307 (AAWDPEAPREGPPFV) are extracellular. Residues 308-327 (LLMLLASLNSCTNPWIYASF) form a helical membrane-spanning segment. The Cytoplasmic portion of the chain corresponds to 328–370 (SSSISSELRSLLCCTWRRAPPSPGPQEESCATASSFLAKDTPS). 2 S-palmitoyl cysteine lipidation sites follow: cysteine 340 and cysteine 341. The tract at residues 347 to 370 (PPSPGPQEESCATASSFLAKDTPS) is disordered.

Belongs to the G-protein coupled receptor 1 family. Vasopressin/oxytocin receptor subfamily. As to quaternary structure, interacts with ARRDC4. Identified in a complex containing at least ARRDC4, V2R and HGS. Interacts with TMEM147.

It localises to the cell membrane. In terms of biological role, receptor for arginine vasopressin. The activity of this receptor is mediated by G proteins which activate adenylate cyclase. Involved in renal water reabsorption. The protein is Vasopressin V2 receptor (AVPR2) of Bos taurus (Bovine).